The sequence spans 263 residues: Ribonuclease HII (263 aa).

The 189-residue stretch at 74 to 262 (EHVAGLDEVG…VQETAATRQT (189 aa)) folds into the RNase H type-2 domain. Residues Asp80, Glu81, and Asp172 each coordinate a divalent metal cation.

The protein belongs to the RNase HII family. It depends on Mn(2+) as a cofactor. The cofactor is Mg(2+).

Its subcellular location is the cytoplasm. It carries out the reaction Endonucleolytic cleavage to 5'-phosphomonoester.. Functionally, endonuclease that specifically degrades the RNA of RNA-DNA hybrids. The protein is Ribonuclease HII (rnhB) of Halalkalibacterium halodurans (strain ATCC BAA-125 / DSM 18197 / FERM 7344 / JCM 9153 / C-125) (Bacillus halodurans).